The following is a 218-amino-acid chain: Deoxyribose-phosphate aldolase (218 aa).

D92 functions as the Proton donor/acceptor in the catalytic mechanism. The active-site Schiff-base intermediate with acetaldehyde is the K156. K185 acts as the Proton donor/acceptor in catalysis.

This sequence belongs to the DeoC/FbaB aldolase family. DeoC type 1 subfamily.

It is found in the cytoplasm. It carries out the reaction 2-deoxy-D-ribose 5-phosphate = D-glyceraldehyde 3-phosphate + acetaldehyde. Its pathway is carbohydrate degradation; 2-deoxy-D-ribose 1-phosphate degradation; D-glyceraldehyde 3-phosphate and acetaldehyde from 2-deoxy-alpha-D-ribose 1-phosphate: step 2/2. Its function is as follows. Catalyzes a reversible aldol reaction between acetaldehyde and D-glyceraldehyde 3-phosphate to generate 2-deoxy-D-ribose 5-phosphate. This chain is Deoxyribose-phosphate aldolase, found in Desulfitobacterium hafniense (strain Y51).